Here is a 164-residue protein sequence, read N- to C-terminus: MLAYTFPSFNFYVNGFFSFLFLFLFLFPSLLRFYVILCRPLQVATYPLNRCQQYSSLAIFTASGFWLLVLVPRAKGPSTRRHCYRQLAPTHHRPFFSIFGWAVSGIRPLPEIFTWICASPFFLHSLTPPTFSHFSVYQEEKKEKRRTPKNTEQEGNRMCIWMSG.

Helical transmembrane passes span 11 to 31 (FYVN…PSLL) and 51 to 71 (CQQY…LVLV).

The protein localises to the membrane. This is an uncharacterized protein from Saccharomyces cerevisiae (strain ATCC 204508 / S288c) (Baker's yeast).